Reading from the N-terminus, the 153-residue chain is Insulin-like growth factor 1 (153 aa).

The tract at residues 49 to 77 (GPETLCGAELVDALQFVCGDRGFYFSKPT) is b. Disulfide bonds link Cys-54–Cys-96, Cys-66–Cys-109, and Cys-95–Cys-100. The c stretch occupies residues 78–89 (GYGSSSRRLHHK). Positions 90–110 (GIVDECCFQSCDLRRLEMYCA) are a. A d region spans residues 111–118 (PIKPPKSA). Positions 119–153 (RSVRAQRHTDMPKAQKEVHLKNTSRGNTGNRNYRM) are cleaved as a propeptide — e peptide. The disordered stretch occupies residues 119–153 (RSVRAQRHTDMPKAQKEVHLKNTSRGNTGNRNYRM). The segment covering 125–138 (RHTDMPKAQKEVHL) has biased composition (basic and acidic residues). Positions 139 to 153 (KNTSRGNTGNRNYRM) are enriched in polar residues.

This sequence belongs to the insulin family. As to quaternary structure, forms a ternary complex with IGFR1 and ITGAV:ITGB3. Forms a ternary complex with IGFR1 and ITGA6:ITGB4. Forms a ternary complex with IGFBP3 and ALS.

The protein localises to the secreted. The insulin-like growth factors, isolated from plasma, are structurally and functionally related to insulin but have a much higher growth-promoting activity. Acts as a ligand for IGF1R. Binds to the alpha subunit of IGF1R, leading to the activation of the intrinsic tyrosine kinase activity which autophosphorylates tyrosine residues in the beta subunit thus initiatiating a cascade of down-stream signaling events leading to activation of the PI3K-AKT/PKB and the Ras-MAPK pathways. Binds to integrins. Its binding to integrins and subsequent ternary complex formation with integrins and IGFR1 are essential for IGF1 signaling. This Gallus gallus (Chicken) protein is Insulin-like growth factor 1.